A 438-amino-acid polypeptide reads, in one-letter code: Na(+)/H(+) antiporter NhaA 2 (438 aa).

11 helical membrane-spanning segments follow: residues 21–41, 66–86, 102–122, 130–150, 160–180, 183–203, 206–226, 308–328, 341–361, 376–396, and 410–430; these read SGGI…NSPW, LHHW…GLEL, MLPI…FHFI, KGWG…LALL, IFLT…IALF, GELA…LIAG, LGVQ…VVLL, WVIF…VLQL, LGVA…FSWI, WMDV…SLFI, and AKLG…TVLS.

It belongs to the NhaA Na(+)/H(+) (TC 2.A.33) antiporter family.

It is found in the cell inner membrane. The enzyme catalyses Na(+)(in) + 2 H(+)(out) = Na(+)(out) + 2 H(+)(in). Its function is as follows. Na(+)/H(+) antiporter that extrudes sodium in exchange for external protons. The chain is Na(+)/H(+) antiporter NhaA 2 from Syntrophotalea carbinolica (strain DSM 2380 / NBRC 103641 / GraBd1) (Pelobacter carbinolicus).